Here is a 474-residue protein sequence, read N- to C-terminus: Ribulose bisphosphate carboxylase large chain (474 aa).

Residues Asn-117 and Thr-167 each contribute to the substrate site. Residue Lys-169 is the Proton acceptor of the active site. Lys-171 is a binding site for substrate. Mg(2+)-binding residues include Lys-195, Asp-197, and Glu-198. Lys-195 bears the N6-carboxylysine mark. His-288 functions as the Proton acceptor in the catalytic mechanism. Residues Arg-289, His-321, and Ser-373 each coordinate substrate.

Belongs to the RuBisCO large chain family. Type I subfamily. As to quaternary structure, heterohexadecamer of 8 large chains and 8 small chains. Requires Mg(2+) as cofactor.

It catalyses the reaction 2 (2R)-3-phosphoglycerate + 2 H(+) = D-ribulose 1,5-bisphosphate + CO2 + H2O. The enzyme catalyses D-ribulose 1,5-bisphosphate + O2 = 2-phosphoglycolate + (2R)-3-phosphoglycerate + 2 H(+). In terms of biological role, ruBisCO catalyzes two reactions: the carboxylation of D-ribulose 1,5-bisphosphate, the primary event in carbon dioxide fixation, as well as the oxidative fragmentation of the pentose substrate. Both reactions occur simultaneously and in competition at the same active site. This is Ribulose bisphosphate carboxylase large chain from Hydrogenophilus thermoluteolus (Pseudomonas hydrogenothermophila).